The sequence spans 490 residues: Cobyric acid synthase (490 aa).

The GATase cobBQ-type domain maps to 252–439 (RLKVVVPVLP…LHGLFESTAA (188 aa)). Cys-333 serves as the catalytic Nucleophile. Residue His-431 is part of the active site.

It belongs to the CobB/CobQ family. CobQ subfamily.

It participates in cofactor biosynthesis; adenosylcobalamin biosynthesis. Its function is as follows. Catalyzes amidations at positions B, D, E, and G on adenosylcobyrinic A,C-diamide. NH(2) groups are provided by glutamine, and one molecule of ATP is hydrogenolyzed for each amidation. The chain is Cobyric acid synthase from Pseudomonas aeruginosa (strain UCBPP-PA14).